A 515-amino-acid chain; its full sequence is Bifunctional dihydrofolate reductase-thymidylate synthase (515 aa).

The DHFR domain occupies 26-228 (AFSIVVAADQ…LSYEIMKYVP (203 aa)). Residue valine 30 coordinates substrate. NADP(+) contacts are provided by residues alanine 32, 38 to 44 (GIGDGET), 81 to 83 (RKT), and 101 to 104 (LSCR). Substrate-binding residues include isoleucine 154, tyrosine 160, and threonine 178. 155-162 (GGARVYTE) lines the NADP(+) pocket. The interval 233-515 (ERQYLELIDR…YPPIKMEMAV (283 aa)) is thymidylate synthase. Residue arginine 253 coordinates dUMP. The active site involves cysteine 395. Residues histidine 396, 416-420 (QRCCD), asparagine 428, and 458-460 (HVY) contribute to the dUMP site.

It in the N-terminal section; belongs to the dihydrofolate reductase family. The protein in the C-terminal section; belongs to the thymidylate synthase family.

It catalyses the reaction (6S)-5,6,7,8-tetrahydrofolate + NADP(+) = 7,8-dihydrofolate + NADPH + H(+). It carries out the reaction dUMP + (6R)-5,10-methylene-5,6,7,8-tetrahydrofolate = 7,8-dihydrofolate + dTMP. It functions in the pathway cofactor biosynthesis; tetrahydrofolate biosynthesis; 5,6,7,8-tetrahydrofolate from 7,8-dihydrofolate: step 1/1. Functionally, bifunctional enzyme. Involved in de novo dTMP biosynthesis. Key enzyme in folate metabolism. Catalyzes an essential reaction for de novo glycine and purine synthesis, DNA precursor synthesis, and for the conversion of dUMP to dTMP. The protein is Bifunctional dihydrofolate reductase-thymidylate synthase of Crithidia fasciculata.